A 441-amino-acid polypeptide reads, in one-letter code: Dolichyl-diphosphooligosaccharide--protein glycosyltransferase 48 kDa subunit (441 aa).

Residues 1-28 form the signal peptide; that stretch reads MATALSGGFSKNALFILSAALMLQAVLG. The Lumenal segment spans residues 29–410; the sequence is DGKTLVLLDN…TQYERFIPSA (382 aa). Residues 411 to 431 form a helical membrane-spanning segment; the sequence is FPYYASAFSMMAGLFVFSVVF. The Cytoplasmic portion of the chain corresponds to 432–441; it reads LHMREKEKSD.

It belongs to the DDOST 48 kDa subunit family. In terms of assembly, component of the oligosaccharyltransferase (OST) complex.

The protein localises to the endoplasmic reticulum membrane. Its pathway is protein modification; protein glycosylation. In terms of biological role, subunit of the oligosaccharyl transferase (OST) complex that catalyzes the initial transfer of a defined glycan (Glc(3)Man(9)GlcNAc(2) in eukaryotes) from the lipid carrier dolichol-pyrophosphate to an asparagine residue within an Asn-X-Ser/Thr consensus motif in nascent polypeptide chains, the first step in protein N-glycosylation. N-glycosylation occurs cotranslationally and the complex associates with the Sec61 complex at the channel-forming translocon complex that mediates protein translocation across the endoplasmic reticulum (ER). All subunits are required for a maximal enzyme activity. Required for the assembly of both SST3A- and SS3B-containing OST complexes. This chain is Dolichyl-diphosphooligosaccharide--protein glycosyltransferase 48 kDa subunit, found in Danio rerio (Zebrafish).